A 192-amino-acid polypeptide reads, in one-letter code: 3-hydroxyanthranilate 3,4-dioxygenase 1 (192 aa).

Arg-50 contacts O2. Residues His-54, Glu-60, and His-102 each contribute to the Fe cation site. Glu-60 is a binding site for substrate. Arg-106 and Glu-116 together coordinate substrate. The a divalent metal cation site is built by Cys-131, Cys-134, Cys-168, and Cys-171.

This sequence belongs to the 3-HAO family. Fe(2+) is required as a cofactor.

Its subcellular location is the cytoplasm. It carries out the reaction 3-hydroxyanthranilate + O2 = (2Z,4Z)-2-amino-3-carboxymuconate 6-semialdehyde. It functions in the pathway cofactor biosynthesis; NAD(+) biosynthesis; quinolinate from L-kynurenine: step 3/3. In terms of biological role, catalyzes the oxidative ring opening of 3-hydroxyanthranilate to 2-amino-3-carboxymuconate semialdehyde, which spontaneously cyclizes to quinolinate. This Aspergillus clavatus (strain ATCC 1007 / CBS 513.65 / DSM 816 / NCTC 3887 / NRRL 1 / QM 1276 / 107) protein is 3-hydroxyanthranilate 3,4-dioxygenase 1 (bna1-1).